We begin with the raw amino-acid sequence, 356 residues long: Arginine kinase (356 aa).

The 84-residue stretch at 8–91 (EKLEAGFKKL…FDPIIEDYHG (84 aa)) folds into the Phosphagen kinase N-terminal domain. 64 to 68 (GVGIY) serves as a coordination point for substrate. The region spanning 119–356 (YVISTRVRCG…LELIKIEGSL (238 aa)) is the Phosphagen kinase C-terminal domain. ATP is bound by residues 122-126 (STRVR) and histidine 185. Residue glutamate 225 coordinates substrate. Arginine 229 lines the ATP pocket. Cysteine 271 provides a ligand contact to substrate. ATP contacts are provided by residues 280–284 (RASVH) and 309–314 (RGSTGE). Glutamate 314 is a substrate binding site.

It belongs to the ATP:guanido phosphotransferase family.

The enzyme catalyses L-arginine + ATP = N(omega)-phospho-L-arginine + ADP + H(+). This chain is Arginine kinase (ARGK), found in Schistocerca americana (American grasshopper).